We begin with the raw amino-acid sequence, 92 residues long: MLTINSDAKLKDLLEFPCSFTYKVMGHAKPELPELVLEVIQRHAPGDYSPKVKPSAKGNYHSVSINITATSIEQVETLYKELGEIDIVRMVL.

The protein belongs to the UPF0250 family.

The polypeptide is UPF0250 protein VP0718 (Vibrio parahaemolyticus serotype O3:K6 (strain RIMD 2210633)).